The chain runs to 281 residues: Pantothenate synthetase (281 aa).

30-37 (MGNLHQGH) contributes to the ATP binding site. The active-site Proton donor is the His-37. Gln-61 contributes to the (R)-pantoate binding site. Gln-61 is a binding site for beta-alanine. 149-152 (GNKD) is a binding site for ATP. (R)-pantoate is bound at residue Gln-155. ATP-binding positions include Ile-178 and 186–189 (MSSR).

The protein belongs to the pantothenate synthetase family. As to quaternary structure, homodimer.

The protein resides in the cytoplasm. It carries out the reaction (R)-pantoate + beta-alanine + ATP = (R)-pantothenate + AMP + diphosphate + H(+). The protein operates within cofactor biosynthesis; (R)-pantothenate biosynthesis; (R)-pantothenate from (R)-pantoate and beta-alanine: step 1/1. In terms of biological role, catalyzes the condensation of pantoate with beta-alanine in an ATP-dependent reaction via a pantoyl-adenylate intermediate. This Shewanella sp. (strain MR-7) protein is Pantothenate synthetase.